A 360-amino-acid chain; its full sequence is Autoinducer 2 import system permease protein LsrC (360 aa).

Helical transmembrane passes span 18–38 (TALLAILALFALLGVIDRNYF), 45–65 (MIFSSAQILILLAIGATMVML), 76–96 (ITGLCAVTVGMALNAGFGLAL), 99–119 (LFALLVGMGAGFFNGILVTWL), 121–141 (IPAIVATLGTLGLYRGLMLLL), 161–181 (ILFSISPIGWLIMLLIVAMAL), 219–239 (MNGVMAALAGIVFASQIGFIP), 255–275 (VLGGISLLGGTGTIIGAILGA), and 290–310 (LPAWWNDFIAGLVLLGVLVFD). A disordered region spans residues 334–360 (VAPDKKVKSNNNKAPSSKSFTKKEVVR). The segment covering 342–352 (SNNNKAPSSKS) has biased composition (low complexity).

It belongs to the binding-protein-dependent transport system permease family. AraH/RbsC subfamily. As to quaternary structure, the complex is composed of two ATP-binding proteins (LsrA), two transmembrane proteins (LsrC and LsrD) and a solute-binding protein (LsrB).

It is found in the cell inner membrane. In terms of biological role, part of the ABC transporter complex LsrABCD involved in autoinducer 2 (AI-2) import. Probably responsible for the translocation of the substrate across the membrane. The sequence is that of Autoinducer 2 import system permease protein LsrC (lsrC) from Yersinia enterocolitica serotype O:8 / biotype 1B (strain NCTC 13174 / 8081).